Reading from the N-terminus, the 731-residue chain is Catalase-peroxidase (731 aa).

The segment at residues 98–226 is a cross-link (tryptophyl-tyrosyl-methioninium (Trp-Tyr) (with M-252)); it reads WHAAGTYRTA…LAAVQMGLIY (129 aa). The Proton acceptor role is filled by His-99. Residues 226 to 252 constitute a cross-link (tryptophyl-tyrosyl-methioninium (Tyr-Met) (with W-98)); it reads YVNPEGPDGNPDIVASGHDVIETFGRM. A heme b-binding site is contributed by His-267.

The protein belongs to the peroxidase family. Peroxidase/catalase subfamily. In terms of assembly, homodimer or homotetramer. Heme b serves as cofactor. Formation of the three residue Trp-Tyr-Met cross-link is important for the catalase, but not the peroxidase activity of the enzyme.

The enzyme catalyses H2O2 + AH2 = A + 2 H2O. It catalyses the reaction 2 H2O2 = O2 + 2 H2O. Its function is as follows. Bifunctional enzyme with both catalase and broad-spectrum peroxidase activity. This is Catalase-peroxidase from Ruegeria pomeroyi (strain ATCC 700808 / DSM 15171 / DSS-3) (Silicibacter pomeroyi).